Consider the following 216-residue polypeptide: Uracil phosphoribosyltransferase (216 aa).

Position 30–34 (30–34) interacts with GTP; the sequence is KNLVK. Residues Arg-80, Arg-105, and 140–148 each bind 5-phospho-alpha-D-ribose 1-diphosphate; that span reads DPMIATGST. Uracil-binding positions include Ile-203 and 208–210; that span reads GDA. A 5-phospho-alpha-D-ribose 1-diphosphate-binding site is contributed by Asp-209.

The protein belongs to the UPRTase family. Requires Mg(2+) as cofactor.

It carries out the reaction UMP + diphosphate = 5-phospho-alpha-D-ribose 1-diphosphate + uracil. It participates in pyrimidine metabolism; UMP biosynthesis via salvage pathway; UMP from uracil: step 1/1. Its activity is regulated as follows. Allosterically activated by GTP. Catalyzes the conversion of uracil and 5-phospho-alpha-D-ribose 1-diphosphate (PRPP) to UMP and diphosphate. The chain is Uracil phosphoribosyltransferase from Sulfolobus acidocaldarius (strain ATCC 33909 / DSM 639 / JCM 8929 / NBRC 15157 / NCIMB 11770).